We begin with the raw amino-acid sequence, 452 residues long: Diphthine methyltransferase (452 aa).

WD repeat units follow at residues 79–130 (PLVE…SHVL), 131–185 (EPLS…RPRL), 186–229 (QKVA…RVPG), 230–273 (KFLF…RNMK), 274–313 (QPLA…LNCQ), 314–403 (KAME…TEGM), and 404–448 (RKNG…HLWE). S353 carries the phosphoserine modification. A disordered region spans residues 371 to 402 (SELPTPCHECREDNDGEGHARPQSGMKPLTEG). Residues 378–390 (HECREDNDGEGHA) show a composition bias toward basic and acidic residues.

The protein belongs to the DPH7 family. Interacts with INCA1.

The catalysed reaction is diphthine methyl ester-[translation elongation factor 2] + H2O = diphthine-[translation elongation factor 2] + methanol + H(+). The protein operates within protein modification; peptidyl-diphthamide biosynthesis. Its function is as follows. Catalyzes the demethylation of diphthine methyl ester to form diphthine, an intermediate diphthamide biosynthesis, a post-translational modification of histidine which occurs in translation elongation factor 2 (EEF2) which can be ADP-ribosylated by diphtheria toxin and by Pseudomonas exotoxin A (Eta). In Homo sapiens (Human), this protein is Diphthine methyltransferase (DPH7).